A 560-amino-acid polypeptide reads, in one-letter code: Membrane-bound O-acyltransferase GUP1 (560 aa).

At 1-43 (MSLISILSPLITSEGLDSRIKPSPKKDASTTTKPSLWKTTEFK) the chain is on the extracellular side. Residues 44–64 (FYYIAFLVVVPLMFYAGLQAS) traverse the membrane as a helical segment. At 65–101 (SPENPNYARYERLLSQGWLFGRKVDNSDSQYRFFRDN) the chain is on the cytoplasmic side. The helical transmembrane segment at 102 to 122 (FALLSVLMLVHTSIKRIVLYS) threads the bilayer. Residues 123 to 131 (TNITKLRFD) lie on the Extracellular side of the membrane. A helical membrane pass occupies residues 132 to 152 (LIFGLIFLVAAHGVNSIRILA). The Cytoplasmic portion of the chain corresponds to 153 to 165 (HMLILYAIAHVLK). The chain crosses the membrane as a helical span at residues 166 to 185 (NFRRIATISIWIYGISTLFI). At 186-276 (NDNFRAYPFG…AAHPIQDYSL (91 aa)) the chain is on the extracellular side. The helical transmembrane segment at 277 to 297 (MNYIAYVTYTPLFIAGPIITF) threads the bilayer. Over 298 to 322 (NDYVYQSKHTLPSINFKFIFYYAVR) the chain is Cytoplasmic. The helical transmembrane segment at 323-343 (FVIALLSMEFILHFLHVVAIS) threads the bilayer. At 344–352 (KTKAWENDT) the chain is on the extracellular side. The chain crosses the membrane as a helical span at residues 353–373 (PFQISMIGLFNLNIIWLKLLI). At 374–432 (PWRLFRLWALLDGIDTPENMIRCVDNNYSSLAFWRAWHRSYNKWVVRYIYIPLGGSKNR) the chain is on the cytoplasmic side. Transmembrane regions (helical) follow at residues 433-453 (VLTSLAVFSFVAIWHDIELKL) and 454-474 (LLWGWLIVLFLLPEIFATQIF). The active site involves histidine 447. The Cytoplasmic segment spans residues 475-485 (SHYTDAVWYRH). The chain crosses the membrane as a helical span at residues 486–506 (VCAVGAVFNIWVMMIANLFGF). At 507–526 (CLGSDGTKKLLSDMFCTVSG) the chain is on the extracellular side. Residues 527-547 (FKFVILASVSLFIAVQIMFEI) form a helical membrane-spanning segment. At 548–560 (REEEKRHGIYLKC) the chain is on the cytoplasmic side.

Belongs to the membrane-bound acyltransferase family. Interacts with mitochondrial outer membrane voltage-dependent anion channel (VDAC) POR1.

The protein localises to the cell membrane. The protein resides in the endoplasmic reticulum membrane. Its subcellular location is the mitochondrion membrane. Its function is as follows. Membrane-bound O-acyltransferase involved in the remodeling of glycosylphosphatidylinositol (GPI) anchors. Acts only on GPI-anchored proteins, but not on free GPI lipids. Acts as an acyltransferase for GPI anchors that adds C26 fatty acids to the sn2 position of lyso-PI-containing GPI anchors. PER1 first deacylates, GUP1 subsequently reacylates the anchor lipid, thus replacing a shorter fatty acid (C16:0 or C18:0) by C26:0. Also involved in lipid metabolism, having profound effects on sphingolipid-sterol-ordered domains integrity and assembly. Together with GUP2, has an influence on the chemical composition of the yeast extracellular matrix (yECM) in yeast multicellular aggregates, such as biofilms and colonies. Involved in cell integrity and apoptosis. This chain is Membrane-bound O-acyltransferase GUP1 (GUP1), found in Saccharomyces cerevisiae (strain ATCC 204508 / S288c) (Baker's yeast).